The sequence spans 187 residues: Elongation factor P (187 aa).

The residue at position 34 (K34) is an N6-(3,6-diaminohexanoyl)-5-hydroxylysine.

Belongs to the elongation factor P family. May be beta-lysylated on the epsilon-amino group of Lys-34 by the combined action of EpmA and EpmB, and then hydroxylated on the C5 position of the same residue by EpmC (if this protein is present). Lysylation is critical for the stimulatory effect of EF-P on peptide-bond formation. The lysylation moiety may extend toward the peptidyltransferase center and stabilize the terminal 3-CCA end of the tRNA. Hydroxylation of the C5 position on Lys-34 may allow additional potential stabilizing hydrogen-bond interactions with the P-tRNA.

It is found in the cytoplasm. It participates in protein biosynthesis; polypeptide chain elongation. Involved in peptide bond synthesis. Alleviates ribosome stalling that occurs when 3 or more consecutive Pro residues or the sequence PPG is present in a protein, possibly by augmenting the peptidyl transferase activity of the ribosome. Modification of Lys-34 is required for alleviation. This is Elongation factor P from Thioalkalivibrio sulfidiphilus (strain HL-EbGR7).